The following is a 281-amino-acid chain: 4-diphosphocytidyl-2-C-methyl-D-erythritol kinase (281 aa).

Lys-15 is an active-site residue. ATP is bound at residue 98–108 (PTGAGLGGGSS). Asp-140 is an active-site residue.

Belongs to the GHMP kinase family. IspE subfamily.

The catalysed reaction is 4-CDP-2-C-methyl-D-erythritol + ATP = 4-CDP-2-C-methyl-D-erythritol 2-phosphate + ADP + H(+). Its pathway is isoprenoid biosynthesis; isopentenyl diphosphate biosynthesis via DXP pathway; isopentenyl diphosphate from 1-deoxy-D-xylulose 5-phosphate: step 3/6. Catalyzes the phosphorylation of the position 2 hydroxy group of 4-diphosphocytidyl-2C-methyl-D-erythritol. In Neisseria meningitidis serogroup C (strain 053442), this protein is 4-diphosphocytidyl-2-C-methyl-D-erythritol kinase.